We begin with the raw amino-acid sequence, 217 residues long: Zinc finger CCHC-type and RNA-binding motif-containing protein 1 (217 aa).

One can recognise an RRM domain in the interval 10–88 (STVYVSNLPF…RVIKASIAID (79 aa)). A CCHC-type zinc finger spans residues 105–122 (SKCYECGESGHLSYACPK). Positions 120–217 (CPKNMLGERE…YFSDEEELSD (98 aa)) are disordered. Residues 145–163 (PEEEIEEVEVSEEEGEDPA) are compositionally biased toward acidic residues. Phosphoserine is present on residues S155, S210, and S216.

As to quaternary structure, component of the U11/U12 snRNPs that are part of the U12-type spliceosome. Interacts with ZRSR1. In terms of tissue distribution, expressed at higher level in heart and testis, and at lower level in cerebellum. Weakly expressed at low level in liver.

The protein resides in the nucleus. It is found in the nucleoplasm. The polypeptide is Zinc finger CCHC-type and RNA-binding motif-containing protein 1 (Zcrb1) (Mus musculus (Mouse)).